The primary structure comprises 616 residues: Electron transfer flavoprotein-ubiquinone oxidoreductase, mitochondrial (616 aa).

The N-terminal 32 residues, methionine 1 to cysteine 32, are a transit peptide targeting the mitochondrion. Valine 70 to isoleucine 84 lines the FAD pocket. Position 95 is an N6-acetyllysine (lysine 95). The stretch at isoleucine 108–aspartate 129 is an intramembrane region. An N6-acetyllysine mark is found at lysine 131 and lysine 222. A ubiquinone-binding residues include glycine 304 and glycine 305. N6-acetyllysine occurs at positions 356 and 415. Residues alanine 427–glutamate 446 lie within the membrane without spanning it. Phosphoserine is present on serine 550. Cysteine 560, cysteine 585, cysteine 588, and cysteine 591 together coordinate [4Fe-4S] cluster. The 4Fe-4S ferredoxin-type domain maps to phenylalanine 576–proline 605.

Belongs to the ETF-QO/FixC family. Monomer. [4Fe-4S] cluster is required as a cofactor. FAD serves as cofactor.

Its subcellular location is the mitochondrion inner membrane. It catalyses the reaction a ubiquinone + reduced [electron-transfer flavoprotein] = a ubiquinol + oxidized [electron-transfer flavoprotein] + H(+). Its function is as follows. Accepts electrons from ETF and reduces ubiquinone. This is Electron transfer flavoprotein-ubiquinone oxidoreductase, mitochondrial (Etfdh) from Rattus norvegicus (Rat).